The chain runs to 151 residues: Ribosomal RNA large subunit methyltransferase H (151 aa).

S-adenosyl-L-methionine is bound by residues leucine 73, glycine 100, and leucine 119–leucine 124.

The protein belongs to the RNA methyltransferase RlmH family. Homodimer.

Its subcellular location is the cytoplasm. The enzyme catalyses pseudouridine(1915) in 23S rRNA + S-adenosyl-L-methionine = N(3)-methylpseudouridine(1915) in 23S rRNA + S-adenosyl-L-homocysteine + H(+). Functionally, specifically methylates the pseudouridine at position 1915 (m3Psi1915) in 23S rRNA. The sequence is that of Ribosomal RNA large subunit methyltransferase H from Campylobacter hominis (strain ATCC BAA-381 / DSM 21671 / CCUG 45161 / LMG 19568 / NCTC 13146 / CH001A).